Consider the following 344-residue polypeptide: Biotin synthase (344 aa).

Residues 40 to 267 form the Radical SAM core domain; sequence AQVQVSTLLS…KSMVRLSAGR (228 aa). Residues Cys-55, Cys-59, and Cys-62 each contribute to the [4Fe-4S] cluster site. [2Fe-2S] cluster-binding residues include Cys-99, Cys-130, Cys-190, and Arg-262.

It belongs to the radical SAM superfamily. Biotin synthase family. In terms of assembly, homodimer. [4Fe-4S] cluster is required as a cofactor. It depends on [2Fe-2S] cluster as a cofactor.

The catalysed reaction is (4R,5S)-dethiobiotin + (sulfur carrier)-SH + 2 reduced [2Fe-2S]-[ferredoxin] + 2 S-adenosyl-L-methionine = (sulfur carrier)-H + biotin + 2 5'-deoxyadenosine + 2 L-methionine + 2 oxidized [2Fe-2S]-[ferredoxin]. It participates in cofactor biosynthesis; biotin biosynthesis; biotin from 7,8-diaminononanoate: step 2/2. Functionally, catalyzes the conversion of dethiobiotin (DTB) to biotin by the insertion of a sulfur atom into dethiobiotin via a radical-based mechanism. This Xanthomonas euvesicatoria pv. vesicatoria (strain 85-10) (Xanthomonas campestris pv. vesicatoria) protein is Biotin synthase.